The chain runs to 239 residues: Uridylate kinase (239 aa).

ATP is bound at residue 10-13 (KFSG). The involved in allosteric activation by GTP stretch occupies residues 18 to 23 (GENGFG). Glycine 52 contributes to the UMP binding site. ATP-binding residues include glycine 53 and arginine 57. Residues aspartate 73 and 134–141 (TGNPYFTT) contribute to the UMP site. The ATP site is built by threonine 161, tyrosine 167, and aspartate 170.

This sequence belongs to the UMP kinase family. Homohexamer.

It localises to the cytoplasm. It carries out the reaction UMP + ATP = UDP + ADP. The protein operates within pyrimidine metabolism; CTP biosynthesis via de novo pathway; UDP from UMP (UMPK route): step 1/1. Its activity is regulated as follows. Allosterically activated by GTP. Inhibited by UTP. Its function is as follows. Catalyzes the reversible phosphorylation of UMP to UDP. The sequence is that of Uridylate kinase from Campylobacter jejuni subsp. jejuni serotype O:2 (strain ATCC 700819 / NCTC 11168).